A 276-amino-acid polypeptide reads, in one-letter code: Ribosomal RNA small subunit methyltransferase A (276 aa).

Positions 27, 29, 54, 75, 101, and 122 each coordinate S-adenosyl-L-methionine.

This sequence belongs to the class I-like SAM-binding methyltransferase superfamily. rRNA adenine N(6)-methyltransferase family. RsmA subfamily.

The protein resides in the cytoplasm. The catalysed reaction is adenosine(1518)/adenosine(1519) in 16S rRNA + 4 S-adenosyl-L-methionine = N(6)-dimethyladenosine(1518)/N(6)-dimethyladenosine(1519) in 16S rRNA + 4 S-adenosyl-L-homocysteine + 4 H(+). Specifically dimethylates two adjacent adenosines (A1518 and A1519) in the loop of a conserved hairpin near the 3'-end of 16S rRNA in the 30S particle. May play a critical role in biogenesis of 30S subunits. This chain is Ribosomal RNA small subunit methyltransferase A, found in Brucella melitensis biotype 1 (strain ATCC 23456 / CCUG 17765 / NCTC 10094 / 16M).